Reading from the N-terminus, the 220-residue chain is Redox-sensing transcriptional repressor Rex (220 aa).

The H-T-H motif DNA-binding region spans 16-55 (MYVQVLETLKREGSQVVSSELLARTCSVNPSQIRKDLAYF). Residue 90-95 (GIGNLG) participates in NAD(+) binding.

Belongs to the transcriptional regulatory Rex family. In terms of assembly, homodimer.

The protein resides in the cytoplasm. Modulates transcription in response to changes in cellular NADH/NAD(+) redox state. The protein is Redox-sensing transcriptional repressor Rex of Solidesulfovibrio magneticus (strain ATCC 700980 / DSM 13731 / RS-1) (Desulfovibrio magneticus).